The following is a 367-amino-acid chain: Uroporphyrinogen decarboxylase (367 aa).

The residue at position 1 (Met1) is an N-acetylmethionine. Coproporphyrinogen I is bound by residues Arg37, Ala39, Arg41, Arg50, Asp86, Tyr164, Ser219, and His339. Residues Arg37, Ala39, and Arg41 each contribute to the coproporphyrinogen III site. 4 residues coordinate coproporphyrinogen III: Asp86, Tyr164, Ser219, and His339.

This sequence belongs to the uroporphyrinogen decarboxylase family. As to quaternary structure, homodimer.

The protein resides in the cytoplasm. The protein localises to the cytosol. The enzyme catalyses uroporphyrinogen III + 4 H(+) = coproporphyrinogen III + 4 CO2. It carries out the reaction uroporphyrinogen I + 4 H(+) = coproporphyrinogen I + 4 CO2. It participates in porphyrin-containing compound metabolism; protoporphyrin-IX biosynthesis; coproporphyrinogen-III from 5-aminolevulinate: step 4/4. Its function is as follows. Catalyzes the sequential decarboxylation of the four acetate side chains of uroporphyrinogen to form coproporphyrinogen and participates in the fifth step in the heme biosynthetic pathway. Isomer I or isomer III of uroporphyrinogen may serve as substrate, but only coproporphyrinogen III can ultimately be converted to heme. In vitro also decarboxylates pentacarboxylate porphyrinogen I. This Mus musculus (Mouse) protein is Uroporphyrinogen decarboxylase.